We begin with the raw amino-acid sequence, 199 residues long: Nucleoside triphosphate pyrophosphatase (199 aa).

Asp-76 serves as the catalytic Proton acceptor.

It belongs to the Maf family. A divalent metal cation is required as a cofactor.

The protein localises to the cytoplasm. The enzyme catalyses a ribonucleoside 5'-triphosphate + H2O = a ribonucleoside 5'-phosphate + diphosphate + H(+). It carries out the reaction a 2'-deoxyribonucleoside 5'-triphosphate + H2O = a 2'-deoxyribonucleoside 5'-phosphate + diphosphate + H(+). Nucleoside triphosphate pyrophosphatase. May have a dual role in cell division arrest and in preventing the incorporation of modified nucleotides into cellular nucleic acids. The protein is Nucleoside triphosphate pyrophosphatase of Ruegeria pomeroyi (strain ATCC 700808 / DSM 15171 / DSS-3) (Silicibacter pomeroyi).